Reading from the N-terminus, the 362-residue chain is Divinyl chlorophyll a/b light-harvesting protein PcbF (362 aa).

6 consecutive transmembrane segments (helical) span residues 27–47 (FIGSHVAHTGLICFAAGANTL), 89–109 (IAFIGVFHLICSMVYAGAGLL), 150–170 (FILGHHLIFFGVACIWFVEWA), 211–231 (VMGGHAFLAFVEITGGAFHIA), 251–271 (AVLSWSLAGIGWMAIIAAFWC), and 316–336 (LANVHYYLGFFFIQGHLWHAI).

It belongs to the PsbB/PsbC family. IsiA/Pcb subfamily. The antenna complex consists of divinyl chlorophylls (a and b) and divinyl chlorophyll a/b binding proteins and binds more divinyl chlorophyll b than does the antenna complex from high-light-adapted Prochlorococcus. The cofactor is divinyl chlorophyll a. Divinyl chlorophyll b is required as a cofactor.

It is found in the cellular thylakoid membrane. The antenna complex functions as a light receptor, it captures and delivers excitation energy to photosystems II and I. The Prochlorales pcb genes are not related to higher plant LHCs. In Prochlorococcus marinus (strain NATL2A), this protein is Divinyl chlorophyll a/b light-harvesting protein PcbF (pcbF).